We begin with the raw amino-acid sequence, 86 residues long: Large ribosomal subunit protein bL31m (86 aa).

A mitochondrion-targeting transit peptide spans 1–18; the sequence is MKCSLRLFEKAGRLSVRS.

The protein belongs to the bacterial ribosomal protein bL31 family. Highly divergent. As to quaternary structure, component of the mitochondrial large ribosomal subunit (mt-LSU). Mature yeast 74S mitochondrial ribosomes consist of a small (37S) and a large (54S) subunit. The 37S small subunit contains a 15S ribosomal RNA (15S mt-rRNA) and at least 32 different proteins. The 54S large subunit contains a 21S rRNA (21S mt-rRNA) and at least 45 different proteins.

The protein localises to the mitochondrion. In terms of biological role, component of the mitochondrial ribosome (mitoribosome), a dedicated translation machinery responsible for the synthesis of mitochondrial genome-encoded proteins, including at least some of the essential transmembrane subunits of the mitochondrial respiratory chain. The mitoribosomes are attached to the mitochondrial inner membrane and translation products are cotranslationally integrated into the membrane. The chain is Large ribosomal subunit protein bL31m (tam9) from Schizosaccharomyces pombe (strain 972 / ATCC 24843) (Fission yeast).